The following is a 472-amino-acid chain: Uronate isomerase (472 aa).

This sequence belongs to the metallo-dependent hydrolases superfamily. Uronate isomerase family.

It carries out the reaction D-glucuronate = D-fructuronate. The catalysed reaction is aldehydo-D-galacturonate = keto-D-tagaturonate. The protein operates within carbohydrate metabolism; pentose and glucuronate interconversion. The chain is Uronate isomerase from Shouchella clausii (strain KSM-K16) (Alkalihalobacillus clausii).